The sequence spans 614 residues: Lamin-2 (614 aa).

Over residues 1–10 the composition is skewed to basic residues; it reads MSAQVSKKRG. Positions 1–51 are disordered; the sequence is MSAQVSKKRGGSNPPKTGQHAASSTTSRTESSATSQTIYERQEVETRTQRT. The interval 1 to 76 is head; it reads MSAQVSKKRG…GTAGLAGSPL (76 aa). Positions 21-37 are enriched in low complexity; that stretch reads AASSTTSRTESSATSQT. The coil 1A stretch occupies residues 77–117; that stretch reads SRHQEKEEFKLLNNRFANYIDTIRAQQEEISVLRRKVETVS. Residues 81–433 form the IF rod domain; it reads EKEEFKLLNN…ALLRTEEERL (353 aa). The tract at residues 118-128 is linker 1; it reads SKEVVENQKIK. The tract at residues 129-268 is coil 1B; sequence ERYNLEIANL…EEIVSLRNQR (140 aa). The tract at residues 269–286 is linker 2; sequence RTEITEVETRMGEEYQSK. Residues 287–426 form a coil 2 region; sequence IVEQLNDLRA…AELATYNALL (140 aa). The tail stretch occupies residues 427-611; it reads RTEEERLNMK…ADSSDHQKNC (185 aa). The segment at 433–454 is disordered; sequence LNMKSPPFPSTPDSQRRGTKRR. Positions 449–458 match the Nuclear localization signal motif; that stretch reads RGTKRRIADS. Residues 462–581 enclose the LTD domain; the sequence is TRFRNEASAT…VARREMTQSS (120 aa). Cys-611 carries the S-farnesyl cysteine lipid modification. Positions 612-614 are cleaved as a propeptide — removed in mature form; the sequence is VIM.

The protein belongs to the intermediate filament family.

The protein resides in the nucleus inner membrane. Its function is as follows. Intermediate filament (IF) protein, component of the nuclear lamina, a fibrous layer on the nucleoplasmic side of the inner nuclear membrane, which is thought to provide a framework for the nuclear envelope. This Hypsibius exemplaris (Freshwater tardigrade) protein is Lamin-2.